The chain runs to 274 residues: Triosephosphate isomerase (274 aa).

A substrate-binding site is contributed by 31 to 33 (NWK). His118 functions as the Electrophile in the catalytic mechanism. Glu188 (proton acceptor) is an active-site residue. Substrate is bound by residues Gly194, Ser234, and 255 to 256 (GG).

The protein belongs to the triosephosphate isomerase family. As to quaternary structure, homodimer.

It is found in the cytoplasm. It carries out the reaction D-glyceraldehyde 3-phosphate = dihydroxyacetone phosphate. It participates in carbohydrate biosynthesis; gluconeogenesis. The protein operates within carbohydrate degradation; glycolysis; D-glyceraldehyde 3-phosphate from glycerone phosphate: step 1/1. In terms of biological role, involved in the gluconeogenesis. Catalyzes stereospecifically the conversion of dihydroxyacetone phosphate (DHAP) to D-glyceraldehyde-3-phosphate (G3P). This chain is Triosephosphate isomerase, found in Chlamydia trachomatis serovar D (strain ATCC VR-885 / DSM 19411 / UW-3/Cx).